The chain runs to 305 residues: UDP-3-O-acyl-N-acetylglucosamine deacetylase (305 aa).

Zn(2+) contacts are provided by H79, H238, and D242. The active-site Proton donor is the H265.

The protein belongs to the LpxC family. It depends on Zn(2+) as a cofactor.

It carries out the reaction a UDP-3-O-[(3R)-3-hydroxyacyl]-N-acetyl-alpha-D-glucosamine + H2O = a UDP-3-O-[(3R)-3-hydroxyacyl]-alpha-D-glucosamine + acetate. It participates in glycolipid biosynthesis; lipid IV(A) biosynthesis; lipid IV(A) from (3R)-3-hydroxytetradecanoyl-[acyl-carrier-protein] and UDP-N-acetyl-alpha-D-glucosamine: step 2/6. Its function is as follows. Catalyzes the hydrolysis of UDP-3-O-myristoyl-N-acetylglucosamine to form UDP-3-O-myristoylglucosamine and acetate, the committed step in lipid A biosynthesis. This Vibrio atlanticus (strain LGP32) (Vibrio splendidus (strain Mel32)) protein is UDP-3-O-acyl-N-acetylglucosamine deacetylase.